Reading from the N-terminus, the 515-residue chain is Putative ammonium transporter 2 (515 aa).

Helical transmembrane passes span 34–54 (GVWMMASSFIIFTMTAGFGLL), 72–92 (VFDVIFGGLAYWMFGYGLTFG), 124–144 (GISYSLFIFQMSFATTTSTIV), 156–176 (SHCFISFFITLVHSVAGHWVW), 191–211 (AGCSAVHLVGGVSGLVATLYL), 226–246 (VSDPTKAILGFLMIWWGWLAF), 266–286 (AVGTILASAGGGVVTVIITRL), 291–311 (IQMDMLIDGMLASLVASTGGC), 321–337 (LVGAIGSSLALAAYPVT), 346–366 (VGVFPVHVVGSIWGMIAPAIF), 381–401 (FQTSDEINGLLYGGGFYLLFL), and 404–424 (FVILVIGTYSAICAFIILFLI).

This sequence belongs to the ammonia transporter channel (TC 1.A.11.2) family.

The protein resides in the membrane. In terms of biological role, involved in the uptake of ammonia. Implicated in aging. The protein is Putative ammonium transporter 2 (amt-2) of Caenorhabditis elegans.